The sequence spans 414 residues: Gamma-glutamyl phosphate reductase (414 aa).

The protein belongs to the gamma-glutamyl phosphate reductase family.

It is found in the cytoplasm. The catalysed reaction is L-glutamate 5-semialdehyde + phosphate + NADP(+) = L-glutamyl 5-phosphate + NADPH + H(+). The protein operates within amino-acid biosynthesis; L-proline biosynthesis; L-glutamate 5-semialdehyde from L-glutamate: step 2/2. In terms of biological role, catalyzes the NADPH-dependent reduction of L-glutamate 5-phosphate into L-glutamate 5-semialdehyde and phosphate. The product spontaneously undergoes cyclization to form 1-pyrroline-5-carboxylate. The sequence is that of Gamma-glutamyl phosphate reductase from Xanthomonas campestris pv. campestris (strain 8004).